Reading from the N-terminus, the 400-residue chain is NIDGKGQEGLELSREDSLRGEDGAKVVLRDNKGNIVDSLDSPRNSVPKNGQDMILSLDQRIQTLAYDELNKAVAYHKAKAGAVVVLDAQTGEILALVNSPAYDPNQPGQANSEQRRNRAVTDMIEPGSAMKPFTIAKALDSGKVDPTDTFNTLPYKIGPATVQDTHVYPTLDVRGIMQKSSNVGTSKLSAMFTPKEMYDFYHDLGVGVRMHSGFPGETAGLLRSWRRWQKIEQATMSFGYGLQLSLLQLARAYTVLTHDGELLPVSFEKQAVAPKGKRVIKASTAKKVRELMVSVTEAGGTGIAGAVDGFDVGAKTGTARKLVNGRYVDNKHVGTFIGFAPAKNPRVIVAVTIDEPTANGYYGGVVAGPVFKEVMSGSLNILGVSPTKPLSNTATVKVPS.

Positions 1-21 (NIDGKGQEGLELSREDSLRGE) are disordered. The Acyl-ester intermediate role is filled by serine 128.

This sequence belongs to the transpeptidase family. FtsI subfamily.

The protein localises to the cell inner membrane. It carries out the reaction Preferential cleavage: (Ac)2-L-Lys-D-Ala-|-D-Ala. Also transpeptidation of peptidyl-alanyl moieties that are N-acyl substituents of D-alanine.. It participates in cell wall biogenesis; peptidoglycan biosynthesis. In terms of biological role, catalyzes cross-linking of the peptidoglycan cell wall at the division septum. The sequence is that of Probable peptidoglycan D,D-transpeptidase PenA from Neisseria flavescens.